The primary structure comprises 189 residues: Putative manganese efflux pump MntP (189 aa).

Helical transmembrane passes span 3-23, 41-61, 65-85, 104-124, 132-152, and 167-187; these read LSAT…ASIG, LIFG…GLFA, IMEW…CRMI, FWVL…IGVG, IVHT…LGML, and IIGG…HMHL.

This sequence belongs to the MntP (TC 9.B.29) family.

The protein resides in the cell inner membrane. Its function is as follows. Probably functions as a manganese efflux pump. The polypeptide is Putative manganese efflux pump MntP (Yersinia pseudotuberculosis serotype O:1b (strain IP 31758)).